A 253-amino-acid polypeptide reads, in one-letter code: Imidazole glycerol phosphate synthase subunit HisF (253 aa).

Residues D11 and D130 contribute to the active site.

The protein belongs to the HisA/HisF family. Heterodimer of HisH and HisF.

The protein resides in the cytoplasm. It carries out the reaction 5-[(5-phospho-1-deoxy-D-ribulos-1-ylimino)methylamino]-1-(5-phospho-beta-D-ribosyl)imidazole-4-carboxamide + L-glutamine = D-erythro-1-(imidazol-4-yl)glycerol 3-phosphate + 5-amino-1-(5-phospho-beta-D-ribosyl)imidazole-4-carboxamide + L-glutamate + H(+). It functions in the pathway amino-acid biosynthesis; L-histidine biosynthesis; L-histidine from 5-phospho-alpha-D-ribose 1-diphosphate: step 5/9. Functionally, IGPS catalyzes the conversion of PRFAR and glutamine to IGP, AICAR and glutamate. The HisF subunit catalyzes the cyclization activity that produces IGP and AICAR from PRFAR using the ammonia provided by the HisH subunit. The polypeptide is Imidazole glycerol phosphate synthase subunit HisF (Paracoccus denitrificans (strain Pd 1222)).